Here is a 239-residue protein sequence, read N- to C-terminus: Ribose-5-phosphate isomerase A (239 aa).

Substrate-binding positions include 30-33 (SGST), 87-90 (DGAD), and 100-103 (KGGG). Catalysis depends on Glu-109, which acts as the Proton acceptor. Residue Lys-127 participates in substrate binding.

This sequence belongs to the ribose 5-phosphate isomerase family. Homodimer.

The enzyme catalyses aldehydo-D-ribose 5-phosphate = D-ribulose 5-phosphate. The protein operates within carbohydrate degradation; pentose phosphate pathway; D-ribose 5-phosphate from D-ribulose 5-phosphate (non-oxidative stage): step 1/1. Catalyzes the reversible conversion of ribose-5-phosphate to ribulose 5-phosphate. The protein is Ribose-5-phosphate isomerase A of Synechococcus sp. (strain CC9605).